A 2504-amino-acid polypeptide reads, in one-letter code: Fatty acid synthase (2504 aa).

Position 1 is an N-acetylmethionine (Met-1). The Ketosynthase family 3 (KS3) domain maps to 1–406; the sequence is MEEVVIAGMS…GSNVHVILQP (406 aa). Position 59 is an N6-acetyllysine (Lys-59). Ser-63 carries the post-translational modification Phosphoserine. Lys-70 carries the post-translational modification N6-acetyllysine. Catalysis depends on Cys-161, which acts as the For beta-ketoacyl synthase activity. Position 207 is a phosphoserine (Ser-207). His-293 acts as the For beta-ketoacyl synthase activity in catalysis. Lys-298 is modified (N6-acetyllysine). Catalysis depends on His-331, which acts as the For beta-ketoacyl synthase activity. Residues 429 to 817 are acyl and malonyl transferases; the sequence is RTLEAVQDLL…INVNPNALFP (389 aa). At Lys-528 the chain carries N6-acetyllysine. Residue Ser-581 is the For malonyltransferase activity of the active site. Residues 647–648 and Phe-671 contribute to the an acyl-CoA site; that span reads DT. The residue at position 673 (Lys-673) is an N6-acetyllysine. Ser-725 carries the post-translational modification Phosphoserine. An an acyl-CoA-binding site is contributed by Arg-773. Lys-790 is modified (N6-acetyllysine). Residues 844 to 967 are N-terminal hotdog fold; it reads VPVAEDFPNG…VYLWEDPNSK (124 aa). The PKS/mFAS DH domain occupies 844-1104; it reads VPVAEDFPNG…ISRLQTTATS (261 aa). His-878 serves as the catalytic Proton acceptor; for dehydratase activity. A C-terminal hotdog fold region spans residues 982–1104; that stretch reads SVSRLTQGEV…ISRLQTTATS (123 aa). At Lys-993 the chain carries N6-acetyllysine. The Proton donor; for dehydratase activity role is filled by Asp-1032. N6-acetyllysine is present on residues Lys-1071 and Lys-1276. Residue Cys-1464 is modified to S-nitrosocysteine. Ser-1577 and Ser-1587 each carry phosphoserine. Residues 1628–1856 are enoyl reductase; the sequence is DVPSSWTLEE…VQVREEEPEA (229 aa). 1664 to 1681 is an NADP(+) binding site; sequence VLIHSGSGGVGQAAISIA. Lys-1697 carries the N6-(pyridoxal phosphate)lysine; alternate modification. Position 1697 is an N6-acetyllysine; alternate (Lys-1697). Lys-1764 and Lys-1840 each carry N6-acetyllysine. The interval 1857 to 2111 is beta-ketoacyl reductase; it reads VLPGAQPTLI…FVLAEKKAVA (255 aa). 1879-1894 lines the NADP(+) pocket; it reads SYIITGGLGGFGLELA. Lys-1988 carries the N6-acetyllysine modification. The residue at position 2084 (Cys-2084) is an S-nitrosocysteine. Positions 2112–2192 constitute a Carrier domain; that stretch reads HGDGDTQRDL…EMSSKTDSAT (81 aa). Ser-2150 is modified (O-(pantetheine 4'-phosphoryl)serine; alternate). Phosphoserine; alternate is present on Ser-2150. The segment at 2181–2205 is disordered; it reads LQEMSSKTDSATDTTAPKSRSDTSL. Residues 2185-2198 show a composition bias toward low complexity; the sequence is SSKTDSATDTTAPK. Phosphoserine is present on residues Ser-2190 and Ser-2229. A thioesterase region spans residues 2201 to 2504; it reads SDTSLKQNQL…AEPRVSVREG (304 aa). The For thioesterase activity role is filled by Ser-2301. At Lys-2384 the chain carries N6-acetyllysine. A Glycyl lysine isopeptide (Lys-Gly) (interchain with G-Cter in SUMO2) cross-link involves residue Lys-2442. His-2474 serves as the catalytic For thioesterase activity.

In terms of assembly, homodimer which is arranged in a head to tail fashion. Interacts with CEACAM1; this interaction is insulin and phosphorylation-dependent; reduces fatty-acid synthase activity. In terms of processing, S-nitrosylation of Fatty acid synthase at cysteine residues Cys-1464 or Cys-2084 is important for the enzyme dimerization. In adipocytes, S-nitrosylation of Fatty acid synthase occurs under physiological conditions and gradually increases during adipogenesis.

The protein localises to the cytoplasm. It localises to the melanosome. The catalysed reaction is acetyl-CoA + n malonyl-CoA + 2n NADPH + 2n H(+) = a long-chain fatty acid + (n+1) CoA + n CO2 + 2n NADP(+).. The enzyme catalyses holo-[ACP] + acetyl-CoA = acetyl-[ACP] + CoA. It carries out the reaction holo-[ACP] + malonyl-CoA = malonyl-[ACP] + CoA. It catalyses the reaction a fatty acyl-[ACP] + malonyl-[ACP] + H(+) = a 3-oxoacyl-[ACP] + holo-[ACP] + CO2. The catalysed reaction is a (3R)-hydroxyacyl-[ACP] + NADP(+) = a 3-oxoacyl-[ACP] + NADPH + H(+). The enzyme catalyses a (3R)-hydroxyacyl-[ACP] = a (2E)-enoyl-[ACP] + H2O. It carries out the reaction a 2,3-saturated acyl-[ACP] + NADP(+) = a (2E)-enoyl-[ACP] + NADPH + H(+). It catalyses the reaction hexadecanoyl-[ACP] + H2O = hexadecanoate + holo-[ACP] + H(+). The catalysed reaction is acetyl-[ACP] + malonyl-[ACP] + H(+) = 3-oxobutanoyl-[ACP] + holo-[ACP] + CO2. The enzyme catalyses 3-oxobutanoyl-[ACP] + NADPH + H(+) = (3R)-hydroxybutanoyl-[ACP] + NADP(+). It carries out the reaction (3R)-hydroxybutanoyl-[ACP] = (2E)-butenoyl-[ACP] + H2O. It catalyses the reaction (2E)-butenoyl-[ACP] + NADPH + H(+) = butanoyl-[ACP] + NADP(+). The catalysed reaction is butanoyl-[ACP] + malonyl-[ACP] + H(+) = 3-oxohexanoyl-[ACP] + holo-[ACP] + CO2. The enzyme catalyses 3-oxohexanoyl-[ACP] + NADPH + H(+) = (3R)-hydroxyhexanoyl-[ACP] + NADP(+). It carries out the reaction (3R)-hydroxyhexanoyl-[ACP] = (2E)-hexenoyl-[ACP] + H2O. It catalyses the reaction (2E)-hexenoyl-[ACP] + NADPH + H(+) = hexanoyl-[ACP] + NADP(+). The catalysed reaction is hexanoyl-[ACP] + malonyl-[ACP] + H(+) = 3-oxooctanoyl-[ACP] + holo-[ACP] + CO2. The enzyme catalyses 3-oxooctanoyl-[ACP] + NADPH + H(+) = (3R)-hydroxyoctanoyl-[ACP] + NADP(+). It carries out the reaction (3R)-hydroxyoctanoyl-[ACP] = (2E)-octenoyl-[ACP] + H2O. It catalyses the reaction (2E)-octenoyl-[ACP] + NADPH + H(+) = octanoyl-[ACP] + NADP(+). The catalysed reaction is octanoyl-[ACP] + malonyl-[ACP] + H(+) = 3-oxodecanoyl-[ACP] + holo-[ACP] + CO2. The enzyme catalyses 3-oxodecanoyl-[ACP] + NADPH + H(+) = (3R)-hydroxydecanoyl-[ACP] + NADP(+). It carries out the reaction (3R)-hydroxydecanoyl-[ACP] = (2E)-decenoyl-[ACP] + H2O. It catalyses the reaction (2E)-decenoyl-[ACP] + NADPH + H(+) = decanoyl-[ACP] + NADP(+). The catalysed reaction is decanoyl-[ACP] + malonyl-[ACP] + H(+) = 3-oxododecanoyl-[ACP] + holo-[ACP] + CO2. The enzyme catalyses 3-oxododecanoyl-[ACP] + NADPH + H(+) = (3R)-hydroxydodecanoyl-[ACP] + NADP(+). It carries out the reaction (3R)-hydroxydodecanoyl-[ACP] = (2E)-dodecenoyl-[ACP] + H2O. It catalyses the reaction (2E)-dodecenoyl-[ACP] + NADPH + H(+) = dodecanoyl-[ACP] + NADP(+). The catalysed reaction is dodecanoyl-[ACP] + malonyl-[ACP] + H(+) = 3-oxotetradecanoyl-[ACP] + holo-[ACP] + CO2. The enzyme catalyses 3-oxotetradecanoyl-[ACP] + NADPH + H(+) = (3R)-hydroxytetradecanoyl-[ACP] + NADP(+). It carries out the reaction (3R)-hydroxytetradecanoyl-[ACP] = (2E)-tetradecenoyl-[ACP] + H2O. It catalyses the reaction (2E)-tetradecenoyl-[ACP] + NADPH + H(+) = tetradecanoyl-[ACP] + NADP(+). The catalysed reaction is tetradecanoyl-[ACP] + malonyl-[ACP] + H(+) = 3-oxohexadecanoyl-[ACP] + holo-[ACP] + CO2. The enzyme catalyses 3-oxohexadecanoyl-[ACP] + NADPH + H(+) = (3R)-hydroxyhexadecanoyl-[ACP] + NADP(+). It carries out the reaction (3R)-hydroxyhexadecanoyl-[ACP] = (2E)-hexadecenoyl-[ACP] + H2O. It catalyses the reaction (2E)-hexadecenoyl-[ACP] + NADPH + H(+) = hexadecanoyl-[ACP] + NADP(+). The catalysed reaction is hexadecanoyl-[ACP] + malonyl-[ACP] + H(+) = 3-oxooctadecanoyl-[ACP] + holo-[ACP] + CO2. The enzyme catalyses 3-oxooctadecanoyl-[ACP] + NADPH + H(+) = (3R)-hydroxyoctadecanoyl-[ACP] + NADP(+). It carries out the reaction (3R)-hydroxyoctadecanoyl-[ACP] = (2E)-octadecenoyl-[ACP] + H2O. It catalyses the reaction (2E)-octadecenoyl-[ACP] + NADPH + H(+) = octadecanoyl-[ACP] + NADP(+). The catalysed reaction is tetradecanoyl-[ACP] + H2O = tetradecanoate + holo-[ACP] + H(+). Its pathway is lipid metabolism; fatty acid biosynthesis. Its function is as follows. Fatty acid synthetase is a multifunctional enzyme that catalyzes the de novo biosynthesis of long-chain saturated fatty acids starting from acetyl-CoA and malonyl-CoA in the presence of NADPH. This multifunctional protein contains 7 catalytic activities and a site for the binding of the prosthetic group 4'-phosphopantetheine of the acyl carrier protein ([ACP]) domain. The polypeptide is Fatty acid synthase (Fasn) (Mus musculus (Mouse)).